The primary structure comprises 1018 residues: MIPQISQAPGVVQLVLNFLQELEQQGFTGDTATSYADRLTMSTDNSIYQLLPDAVVFPRSTADVALIARLAAQERYSSLIFTPRGGGTGTNGQALNQGIIVDMSRHMNRIIEINPEEGWVRVEAGVIKDQLNQYLKPFGYFFAPELSTSNRATLGGMINTDASGQGSLVYGKTSDHVLGVRAVLLGGDILDTQPLPVELAETLGKSNTTIGRIYNTVYQRCRQQRQLIIDNFPKLNRFLTGYDLRHVFNDEMTEFDLTRILTGSEGTLAFITEARLDITRLPKVRRLVNVKYDSFDSALRNAPFMVEARALSVETVDSKVLNLAREDIVWHSVSELITDVPDQEMLGLNIVEFAGDDEALIDERVNALCARLDELIASHQAGVIGWQVCRELAGVERIYAMRKKAVGLLGNAKGAAKPIPFAEDTCVPPEHLADYIAEFRALLDSHGLSYGMFGHVDAGVLHVRPALDMCDPQQEILMKQISDDVVALTAKYGGLLWGEHGKGFRAEYSPAFFGEELFAELRKVKAAFDPHNRLNPGKICPPEGLDAPMMKVDAVKRGTFDRQIPIAVRQQWRGAMECNGNGLCFNFDARSPMCPSMKITQNRIHSPKGRATLVREWLRLLADRGVDPLKLEQELPESGVSLRTLIARTRNSWHANKGEYDFSHEVKEAMSGCLACKACSTQCPIKIDVPEFRSRFLQLYHTRYLRPLRDHLVATVESYAPLMARAPKTFNFFINQPLVRKLSEKHIGMVDLPLLSVPSLQQQMVGHRSANMTLEQLESLNAEQKARTVLVVQDPFTSYYDAQVVADFVRLVEKLGFQPVLLPFSPNGKAQHIKGFLNRFAKTAKKTADFLNRMAKLGMPMVGVDPALVLCYRDEYKLALGEERGEFNVLLANEWLASALESQPVATVSGESWYFFGHCTEVTALPGAPAQWAAIFARFGAKLENVSVGCCGMAGTYGHEAKNHENSLGIYELSWHQAMQRLPRNRCLATGYSCRSQVKRVEGTGVRHPVQALLEIIK.

Residues Tyr48–Leu281 form the FAD-binding PCMH-type domain. Positions 402 and 500 each coordinate (R)-2-hydroxyglutarate. The 4Fe-4S ferredoxin-type domain maps to Phe662–Arg695. Cys673, Cys676, Cys679, and Cys683 together coordinate [4Fe-4S] cluster.

It in the N-terminal section; belongs to the FAD-binding oxidoreductase/transferase type 4 family. In terms of assembly, homotetramer. It depends on [4Fe-4S] cluster as a cofactor. FAD is required as a cofactor.

The catalysed reaction is (R)-2-hydroxyglutarate + A = 2-oxoglutarate + AH2. Its activity is regulated as follows. Activity is completely inhibited by the addition of 0.5 mM Mn(2+), Ni(2+), or Co(2+) and partially inhibited by 0.5 mM Zn(2+). Functionally, catalyzes the oxidation of D-2-hydroxyglutarate (D-2-HGA) to 2-oxoglutarate. Appears to be the only D2HGDH in E.coli, providing the way to recycle D-2-HGA produced during L-serine synthesis by SerA, by converting it back to 2-oxoglutarate. The physiological molecule that functions as the primary electron acceptor during D-2-HGA oxidation by YdiJ in E.coli is unknown. Shows strict substrate specificity towards D-2-HGA, since it has no detectable activity on L-2-hydroxyglutarate, L-malate, D-malate, L-lactate, D-lactate, L-tartrate, D-tartrate, L-glycerate, D-glycerate, glutarate, or pyruvate. This is D-2-hydroxyglutarate dehydrogenase (ydiJ) from Escherichia coli (strain K12).